A 391-amino-acid polypeptide reads, in one-letter code: Chorismate synthase (391 aa).

NADP(+) is bound at residue R48. Residues 126–128 (RAS), G286, 301–305 (KPTSS), and R328 contribute to the FMN site.

It belongs to the chorismate synthase family. It depends on FMNH2 as a cofactor.

The catalysed reaction is 5-O-(1-carboxyvinyl)-3-phosphoshikimate = chorismate + phosphate. The protein operates within metabolic intermediate biosynthesis; chorismate biosynthesis; chorismate from D-erythrose 4-phosphate and phosphoenolpyruvate: step 7/7. Catalyzes the anti-1,4-elimination of the C-3 phosphate and the C-6 proR hydrogen from 5-enolpyruvylshikimate-3-phosphate (EPSP) to yield chorismate, which is the branch point compound that serves as the starting substrate for the three terminal pathways of aromatic amino acid biosynthesis. This reaction introduces a second double bond into the aromatic ring system. The chain is Chorismate synthase from Saccharolobus islandicus (strain Y.N.15.51 / Yellowstone #2) (Sulfolobus islandicus).